The primary structure comprises 240 residues: Small ribosomal subunit protein eS4 (240 aa).

The 63-residue stretch at 37–99 (VPLVVLLRDV…RGEFFRVFPD (63 aa)) folds into the S4 RNA-binding domain.

It belongs to the eukaryotic ribosomal protein eS4 family.

This is Small ribosomal subunit protein eS4 from Halorubrum lacusprofundi (strain ATCC 49239 / DSM 5036 / JCM 8891 / ACAM 34).